We begin with the raw amino-acid sequence, 131 residues long: Large ribosomal subunit protein bL17 (131 aa).

This sequence belongs to the bacterial ribosomal protein bL17 family. In terms of assembly, part of the 50S ribosomal subunit. Contacts protein L32.

The sequence is that of Large ribosomal subunit protein bL17 from Shewanella sp. (strain ANA-3).